The sequence spans 713 residues: Signal transducer and activator of transcription 1 (713 aa).

In terms of domain architecture, SH2 spans 477 to 574 (WCIGFISKHD…EEMLRYFESE (98 aa)).

This sequence belongs to the transcription factor STAT family. Forms a homodimer or a heterodimer with a related family member.

It is found in the cytoplasm. It localises to the nucleus. Carries out a dual function: signal transduction and activation of transcription. Activated STAT proteins play a role in repression of dauer formation. Neuronal expression is held in check by negative signals through the TGF-beta pathway that target the daf-3 transcription factor. In Caenorhabditis briggsae, this protein is Signal transducer and activator of transcription 1.